Consider the following 189-residue polypeptide: HTH-type transcriptional repressor LfrR (189 aa).

The HTH tetR-type domain maps to 12-70 (ERTRRAILDAAMLVLADHPTAALGDIAAAAGVGRSTVHRYYPERTDLLRALARHVHDLS). The segment at residues 33 to 52 (ALGDIAAAAGVGRSTVHRYY) is a DNA-binding region (H-T-H motif). Residues 70-71 (SN) are proflavine binding.

Homodimer. Forms a structurally asymmetric homodimer exhibiting local unfolding and a blocked drug-binding site.

Its activity is regulated as follows. Repressor activity is regulated by binding of different substrates of the LfrA multidrug efflux pump, such as acriflavine, proflavine, ethidium bromide and rhodamine 123. Binding of these ligands causes the dissociation of LfrR from the promoter, inducing lfrA expression. Represses the transcription of the lfrRA operon by binding directly to the promoter region of lfrR-lfrA. Binds specifically to a 143-bp region upstream of the lfrR gene. The sequence is that of HTH-type transcriptional repressor LfrR from Mycolicibacterium smegmatis (strain ATCC 700084 / mc(2)155) (Mycobacterium smegmatis).